We begin with the raw amino-acid sequence, 423 residues long: Putative competence-damage inducible protein (423 aa).

Belongs to the CinA family.

The protein is Putative competence-damage inducible protein of Streptococcus equi subsp. equi (strain 4047).